The following is a 1888-amino-acid chain: Protein mms22 (1888 aa).

Disordered stretches follow at residues 12–34 (DSQD…RGNE), 151–258 (FSSD…ISSN), and 316–354 (RRKL…SRFD). Polar residues-rich tracts occupy residues 13 to 32 (SQDS…SQRG), 212 to 227 (SNLN…SSTI), and 338 to 348 (SDNSISTPTPT).

Belongs to the MMS22 family.

The protein localises to the nucleus. Involved in protection against replication-dependent DNA damage. May act by restoring active replication forks, repairing unusual DNA structures, and/or preventing aberrant DNA rearrangement at arrested replication forks. In Schizosaccharomyces pombe (strain 972 / ATCC 24843) (Fission yeast), this protein is Protein mms22 (mus7).